We begin with the raw amino-acid sequence, 442 residues long: D-serine dehydratase 1 (442 aa).

K118 is modified (N6-(pyridoxal phosphate)lysine).

It belongs to the serine/threonine dehydratase family. DsdA subfamily. As to quaternary structure, monomer. Pyridoxal 5'-phosphate is required as a cofactor.

It catalyses the reaction D-serine = pyruvate + NH4(+). The protein is D-serine dehydratase 1 of Escherichia coli O6:K15:H31 (strain 536 / UPEC).